We begin with the raw amino-acid sequence, 599 residues long: Calmodulin-binding protein 60 E (599 aa).

The segment at 1–21 (MNKRGYECSQEDTDKLPESKR) is disordered. A calmodulin-binding region spans residues 1–80 (MNKRGYECSQ…LTSRSPEPKR (80 aa)). Residues 150–273 (EDDEDWTREH…VLHKKLLKAN (124 aa)) form a DNA-binding region.

The protein belongs to the plant ACBP60 protein family. In terms of assembly, interacts with calmodulin (CaM).

Its subcellular location is the nucleus. Transcription activator that binds DNA in a sequence-specific manner, likely 5'-GAAATTTTGG-3', to promote the expression of target genes. The sequence is that of Calmodulin-binding protein 60 E from Arabidopsis thaliana (Mouse-ear cress).